Reading from the N-terminus, the 37-residue chain is MIEALPSGIVLGLIPITLAGLFVTAYSQYRRGDQLDI.

Residues 5 to 25 (LPSGIVLGLIPITLAGLFVTA) form a helical membrane-spanning segment.

The protein belongs to the PetG family. As to quaternary structure, the 4 large subunits of the cytochrome b6-f complex are cytochrome b6, subunit IV (17 kDa polypeptide, PetD), cytochrome f and the Rieske protein, while the 4 small subunits are PetG, PetL, PetM and PetN. The complex functions as a dimer.

It localises to the plastid. The protein resides in the chloroplast thylakoid membrane. Component of the cytochrome b6-f complex, which mediates electron transfer between photosystem II (PSII) and photosystem I (PSI), cyclic electron flow around PSI, and state transitions. PetG is required for either the stability or assembly of the cytochrome b6-f complex. This chain is Cytochrome b6-f complex subunit 5, found in Pinus thunbergii (Japanese black pine).